A 172-amino-acid chain; its full sequence is UPF0114 protein PMI3225 (172 aa).

Helical transmembrane passes span 15–35 (LFAP…IKFF), 57–77 (LLSL…IFSG), 108–128 (KVAA…FMDL), and 136–156 (LLWY…MGYL).

Belongs to the UPF0114 family.

It localises to the cell membrane. In Proteus mirabilis (strain HI4320), this protein is UPF0114 protein PMI3225.